The following is a 101-amino-acid chain: MIPGEIDALPGDIDINAGLPTVTVEVTNTGDRPVQVGSHYHFFETNPALSFTRAQTRGFRLNIAAGTAVRFEPGQTRTVELVALGGERKVYGFRGDVMGDL.

Belongs to the urease beta subunit family. In terms of assembly, heterotrimer of UreA (gamma), UreB (beta) and UreC (alpha) subunits. Three heterotrimers associate to form the active enzyme.

It localises to the cytoplasm. The enzyme catalyses urea + 2 H2O + H(+) = hydrogencarbonate + 2 NH4(+). It participates in nitrogen metabolism; urea degradation; CO(2) and NH(3) from urea (urease route): step 1/1. This chain is Urease subunit beta, found in Hahella chejuensis (strain KCTC 2396).